Reading from the N-terminus, the 29-residue chain is uncharacterized protein (29 aa).

This is an uncharacterized protein from Haloarcula hispanica (His1V).